Consider the following 353-residue polypeptide: DNA integrity scanning protein DisA (353 aa).

Residues 6 to 144 (DKELMNILKI…GGIKYVLRDS (139 aa)) enclose the DAC domain. ATP contacts are provided by residues glycine 73, leucine 91, and 104-108 (TRHRT).

Belongs to the DisA family. In terms of assembly, homooctamer. The cofactor is Mg(2+).

It catalyses the reaction 2 ATP = 3',3'-c-di-AMP + 2 diphosphate. In terms of biological role, participates in a DNA-damage check-point that is active prior to asymmetric division when DNA is damaged. DisA forms globular foci that rapidly scan along the chromosomes during sporulation, searching for lesions. When a lesion is present, DisA pauses at the lesion site. This triggers a cellular response that culminates in a temporary block in sporulation initiation. Functionally, also has diadenylate cyclase activity, catalyzing the condensation of 2 ATP molecules into cyclic di-AMP (c-di-AMP). c-di-AMP acts as a signaling molecule that couples DNA integrity with progression of sporulation. The rise in c-di-AMP level generated by DisA while scanning the chromosome, operates as a positive signal that advances sporulation; upon encountering a lesion, the DisA focus arrests at the damaged site and halts c-di-AMP synthesis. This chain is DNA integrity scanning protein DisA, found in Clostridium botulinum (strain Okra / Type B1).